An 853-amino-acid polypeptide reads, in one-letter code: Penicillin-binding protein 1A (853 aa).

Residues 1-6 (MRIAKL) lie on the Cytoplasmic side of the membrane. Residues 7–27 (ILNTLLTLCILGLVAGGMLYF) traverse the membrane as a helical; Signal-anchor for type II membrane protein segment. Residues 28 to 853 (HLKSELQQPM…TPATQPQELF (826 aa)) lie on the Periplasmic side of the membrane. Positions 37–205 (MQIYTADGKL…STMNPLYSLK (169 aa)) are transglycosylase. The Proton donor; for transglycosylase activity role is filled by glutamate 75. The tract at residues 387–681 (QRANGEWQLG…RVISGELAFL (295 aa)) is transpeptidase. The active-site Acyl-ester intermediate; for transpeptidase activity is serine 441. A disordered region spans residues 615 to 636 (NALKPTDDSTNGEELDQQPETV).

This sequence in the N-terminal section; belongs to the glycosyltransferase 51 family. It in the C-terminal section; belongs to the transpeptidase family.

The protein localises to the cell inner membrane. It catalyses the reaction [GlcNAc-(1-&gt;4)-Mur2Ac(oyl-L-Ala-gamma-D-Glu-L-Lys-D-Ala-D-Ala)](n)-di-trans,octa-cis-undecaprenyl diphosphate + beta-D-GlcNAc-(1-&gt;4)-Mur2Ac(oyl-L-Ala-gamma-D-Glu-L-Lys-D-Ala-D-Ala)-di-trans,octa-cis-undecaprenyl diphosphate = [GlcNAc-(1-&gt;4)-Mur2Ac(oyl-L-Ala-gamma-D-Glu-L-Lys-D-Ala-D-Ala)](n+1)-di-trans,octa-cis-undecaprenyl diphosphate + di-trans,octa-cis-undecaprenyl diphosphate + H(+). It carries out the reaction Preferential cleavage: (Ac)2-L-Lys-D-Ala-|-D-Ala. Also transpeptidation of peptidyl-alanyl moieties that are N-acyl substituents of D-alanine.. It functions in the pathway cell wall biogenesis; peptidoglycan biosynthesis. Its function is as follows. Cell wall formation. Synthesis of cross-linked peptidoglycan from the lipid intermediates. The enzyme has a penicillin-insensitive transglycosylase N-terminal domain (formation of linear glycan strands) and a penicillin-sensitive transpeptidase C-terminal domain (cross-linking of the peptide subunits). In Haemophilus influenzae (strain ATCC 51907 / DSM 11121 / KW20 / Rd), this protein is Penicillin-binding protein 1A (mrcA).